Here is a 152-residue protein sequence, read N- to C-terminus: Large ribosomal subunit protein uL13 (152 aa).

Belongs to the universal ribosomal protein uL13 family. Part of the 50S ribosomal subunit.

This protein is one of the early assembly proteins of the 50S ribosomal subunit, although it is not seen to bind rRNA by itself. It is important during the early stages of 50S assembly. This chain is Large ribosomal subunit protein uL13, found in Neorickettsia sennetsu (strain ATCC VR-367 / Miyayama) (Ehrlichia sennetsu).